A 476-amino-acid polypeptide reads, in one-letter code: Aspartyl/glutamyl-tRNA(Asn/Gln) amidotransferase subunit B (476 aa).

This sequence belongs to the GatB/GatE family. GatB subfamily. In terms of assembly, heterotrimer of A, B and C subunits.

It carries out the reaction L-glutamyl-tRNA(Gln) + L-glutamine + ATP + H2O = L-glutaminyl-tRNA(Gln) + L-glutamate + ADP + phosphate + H(+). It catalyses the reaction L-aspartyl-tRNA(Asn) + L-glutamine + ATP + H2O = L-asparaginyl-tRNA(Asn) + L-glutamate + ADP + phosphate + 2 H(+). Functionally, allows the formation of correctly charged Asn-tRNA(Asn) or Gln-tRNA(Gln) through the transamidation of misacylated Asp-tRNA(Asn) or Glu-tRNA(Gln) in organisms which lack either or both of asparaginyl-tRNA or glutaminyl-tRNA synthetases. The reaction takes place in the presence of glutamine and ATP through an activated phospho-Asp-tRNA(Asn) or phospho-Glu-tRNA(Gln). The chain is Aspartyl/glutamyl-tRNA(Asn/Gln) amidotransferase subunit B from Enterococcus faecalis (strain ATCC 700802 / V583).